A 293-amino-acid chain; its full sequence is Ribonuclease HIII (293 aa).

In terms of domain architecture, RNase H type-2 spans 78–293; it reads LPLIGTDEVG…TEKAKKRLER (216 aa). Positions 84, 85, and 187 each coordinate a divalent metal cation.

The protein belongs to the RNase HII family. RnhC subfamily. It depends on Mn(2+) as a cofactor. Requires Mg(2+) as cofactor.

The protein localises to the cytoplasm. The enzyme catalyses Endonucleolytic cleavage to 5'-phosphomonoester.. Its function is as follows. Endonuclease that specifically degrades the RNA of RNA-DNA hybrids. The polypeptide is Ribonuclease HIII (Streptococcus pneumoniae serotype 19F (strain G54)).